A 189-amino-acid chain; its full sequence is S-protein homolog 26 (189 aa).

The first 25 residues, 1–25 (MISMNRLSILLFVFAFGLTMMSNTA), serve as a signal peptide directing secretion.

Belongs to the plant self-incompatibility (S1) protein family.

The protein localises to the secreted. This chain is S-protein homolog 26, found in Arabidopsis thaliana (Mouse-ear cress).